Reading from the N-terminus, the 677-residue chain is DNA ligase (677 aa).

NAD(+) contacts are provided by residues 36-40 (DAEYD), 85-86 (SI), and glutamate 122. Lysine 124 serves as the catalytic N6-AMP-lysine intermediate. 4 residues coordinate NAD(+): arginine 145, glutamate 181, lysine 298, and lysine 322. Positions 416, 419, 434, and 440 each coordinate Zn(2+). Residues 600-677 (LTPRPLAGKT…DEAALRALLD (78 aa)) enclose the BRCT domain.

It belongs to the NAD-dependent DNA ligase family. LigA subfamily. It depends on Mg(2+) as a cofactor. Mn(2+) serves as cofactor.

It catalyses the reaction NAD(+) + (deoxyribonucleotide)n-3'-hydroxyl + 5'-phospho-(deoxyribonucleotide)m = (deoxyribonucleotide)n+m + AMP + beta-nicotinamide D-nucleotide.. DNA ligase that catalyzes the formation of phosphodiester linkages between 5'-phosphoryl and 3'-hydroxyl groups in double-stranded DNA using NAD as a coenzyme and as the energy source for the reaction. It is essential for DNA replication and repair of damaged DNA. The chain is DNA ligase from Methylibium petroleiphilum (strain ATCC BAA-1232 / LMG 22953 / PM1).